Reading from the N-terminus, the 537-residue chain is Chaperonin GroEL (537 aa).

ATP contacts are provided by residues 31–34 (TLGP), 87–91 (DGTTT), glycine 415, and aspartate 495.

This sequence belongs to the chaperonin (HSP60) family. In terms of assembly, forms a cylinder of 14 subunits composed of two heptameric rings stacked back-to-back. Interacts with the co-chaperonin GroES.

It localises to the cytoplasm. It catalyses the reaction ATP + H2O + a folded polypeptide = ADP + phosphate + an unfolded polypeptide.. Functionally, together with its co-chaperonin GroES, plays an essential role in assisting protein folding. The GroEL-GroES system forms a nano-cage that allows encapsulation of the non-native substrate proteins and provides a physical environment optimized to promote and accelerate protein folding. In Methanoregula boonei (strain DSM 21154 / JCM 14090 / 6A8), this protein is Chaperonin GroEL.